A 68-amino-acid polypeptide reads, in one-letter code: Neuronal regeneration-related protein (68 aa).

A disordered region spans residues 22–54; the sequence is EGRLPKGRLPVPKEVNRKKNDETNAASLTPLGS. The span at 44–54 shows a compositional bias: polar residues; sequence TNAASLTPLGS. The residue at position 59 (Ser59) is a Phosphoserine.

Interacts with the latency-associated peptides (LAP) of TGFB1 and TGFB2; the interaction results in a decrease in TGFB autoinduction. Interacts with FLNA. Post-translationally, phosphorylated on Ser-59. Phosphorylation decreases stability and activity. Expressed in lung (at protein level).

The protein resides in the cytoplasm. May have roles in neural function. Ectopic expression augments motility of gliomas. Also promotes axonal regeneration. May also have functions in cellular differentiation. Induces differentiation of fibroblast into myofibroblast and myofibroblast ameboid migration. Increases retinoic-acid regulation of lipid-droplet biogenesis. Down-regulates the expression of TGFB1 and TGFB2 but not of TGFB3. May play a role in the regulation of alveolar generation. This Homo sapiens (Human) protein is Neuronal regeneration-related protein (NREP).